A 286-amino-acid chain; its full sequence is 33 kDa chaperonin (286 aa).

2 disulfides stabilise this stretch: cysteine 225-cysteine 227 and cysteine 258-cysteine 261.

This sequence belongs to the HSP33 family. Post-translationally, under oxidizing conditions two disulfide bonds are formed involving the reactive cysteines. Under reducing conditions zinc is bound to the reactive cysteines and the protein is inactive.

It localises to the cytoplasm. Its function is as follows. Redox regulated molecular chaperone. Protects both thermally unfolding and oxidatively damaged proteins from irreversible aggregation. Plays an important role in the bacterial defense system toward oxidative stress. The protein is 33 kDa chaperonin of Shewanella baltica (strain OS223).